The following is a 100-amino-acid chain: C-X-C motif chemokine 2 (100 aa).

A signal peptide spans 1–31 (MAPPTRQLLNAVLVLLLLLATNHQGTGVVVA). Cystine bridges form between Cys36–Cys62 and Cys38–Cys78.

The protein belongs to the intercrine alpha (chemokine CxC) family. In terms of assembly, homotetramer. In terms of tissue distribution, at least expressed in the lung and trachea.

The protein resides in the secreted. In terms of biological role, chemotactic for human polymorphonuclear leukocytes but does not induce chemokinesis or an oxidative burst. Contributes to neutrophil activation during inflammation. The chain is C-X-C motif chemokine 2 (Cxcl2) from Rattus norvegicus (Rat).